Here is a 290-residue protein sequence, read N- to C-terminus: Protoheme IX farnesyltransferase (290 aa).

9 helical membrane passes run 8–28 (LTKPGIIMGNLISVLAGYFLA), 36–56 (LSLLVYTMLGVALVIASGCVV), 81–101 (INIEFAFLFAIIMLLIGTGLL), 108–128 (LSAVMVLLGYVFYVFFYTMWY), 133–153 (VYGTLVGSVSGAIPPLVGYLA), 163–183 (VLLFGLFCLWQMPHSYAIAMF), 209–229 (IMIYVLVFSVVALGLYAFGHT), 230–247 (GYEYLAVVAISCYGWFKV), and 270–290 (LAITAFSTVLGIELLPFSITF).

This sequence belongs to the UbiA prenyltransferase family. Protoheme IX farnesyltransferase subfamily.

It is found in the cell inner membrane. It catalyses the reaction heme b + (2E,6E)-farnesyl diphosphate + H2O = Fe(II)-heme o + diphosphate. Its pathway is porphyrin-containing compound metabolism; heme O biosynthesis; heme O from protoheme: step 1/1. Converts heme B (protoheme IX) to heme O by substitution of the vinyl group on carbon 2 of heme B porphyrin ring with a hydroxyethyl farnesyl side group. The chain is Protoheme IX farnesyltransferase from Aliivibrio salmonicida (strain LFI1238) (Vibrio salmonicida (strain LFI1238)).